A 124-amino-acid polypeptide reads, in one-letter code: Small ribosomal subunit protein uS12 (124 aa).

The disordered stretch occupies residues 1 to 32; sequence MPTINQLVRKGRRDKTAKVKTAALKGSPQRRG. Position 89 is a 3-methylthioaspartic acid (Asp89). Residues 104–124 are disordered; sequence TQGVKGRKQARSRYGAKKEKS. A compositionally biased stretch (basic residues) spans 108 to 118; the sequence is KGRKQARSRYG.

It belongs to the universal ribosomal protein uS12 family. In terms of assembly, part of the 30S ribosomal subunit. Contacts proteins S8 and S17. May interact with IF1 in the 30S initiation complex.

With S4 and S5 plays an important role in translational accuracy. In terms of biological role, interacts with and stabilizes bases of the 16S rRNA that are involved in tRNA selection in the A site and with the mRNA backbone. Located at the interface of the 30S and 50S subunits, it traverses the body of the 30S subunit contacting proteins on the other side and probably holding the rRNA structure together. The combined cluster of proteins S8, S12 and S17 appears to hold together the shoulder and platform of the 30S subunit. The chain is Small ribosomal subunit protein uS12 from Rhodococcus erythropolis (strain PR4 / NBRC 100887).